The primary structure comprises 379 residues: Bifunctional enzyme IspD/IspF (379 aa).

Positions 1-223 (MTVAVIIVAA…RERKGLTMDV (223 aa)) are 2-C-methyl-D-erythritol 4-phosphate cytidylyltransferase. A 2-C-methyl-D-erythritol 2,4-cyclodiphosphate synthase region spans residues 224 to 379 (RLGNGYDVHA…SIATVTLIGA (156 aa)). Residues Asp-230 and His-232 each coordinate a divalent metal cation. Residues 230-232 (DVH) and 256-257 (HS) each bind 4-CDP-2-C-methyl-D-erythritol 2-phosphate. His-264 contacts a divalent metal cation. 4-CDP-2-C-methyl-D-erythritol 2-phosphate is bound by residues 278 to 280 (DIG), 354 to 357 (TTSE), Phe-361, and Arg-364.

In the N-terminal section; belongs to the IspD/TarI cytidylyltransferase family. IspD subfamily. The protein in the C-terminal section; belongs to the IspF family. The cofactor is a divalent metal cation.

It catalyses the reaction 2-C-methyl-D-erythritol 4-phosphate + CTP + H(+) = 4-CDP-2-C-methyl-D-erythritol + diphosphate. The enzyme catalyses 4-CDP-2-C-methyl-D-erythritol 2-phosphate = 2-C-methyl-D-erythritol 2,4-cyclic diphosphate + CMP. Its pathway is isoprenoid biosynthesis; isopentenyl diphosphate biosynthesis via DXP pathway; isopentenyl diphosphate from 1-deoxy-D-xylulose 5-phosphate: step 2/6. It participates in isoprenoid biosynthesis; isopentenyl diphosphate biosynthesis via DXP pathway; isopentenyl diphosphate from 1-deoxy-D-xylulose 5-phosphate: step 4/6. Bifunctional enzyme that catalyzes the formation of 4-diphosphocytidyl-2-C-methyl-D-erythritol from CTP and 2-C-methyl-D-erythritol 4-phosphate (MEP) (IspD), and catalyzes the conversion of 4-diphosphocytidyl-2-C-methyl-D-erythritol 2-phosphate (CDP-ME2P) to 2-C-methyl-D-erythritol 2,4-cyclodiphosphate (ME-CPP) with a corresponding release of cytidine 5-monophosphate (CMP) (IspF). The sequence is that of Bifunctional enzyme IspD/IspF from Rhodobacter capsulatus (strain ATCC BAA-309 / NBRC 16581 / SB1003).